Reading from the N-terminus, the 314-residue chain is Endo-beta-N-acetylglucosaminidase (314 aa).

A signal peptide spans 1–47 (MQFGIVAAIADGGRTARAGGSVRPPRRPPASHTAWGLPRGRPTGQPH). A disordered region spans residues 14–54 (RTARAGGSVRPPRRPPASHTAWGLPRGRPTGQPHATPTKSG). The GH18 domain maps to 55–309 (PTSIAYVEVN…SSMTKVLYGQ (255 aa)). The Proton donor role is filled by Glu-175.

It belongs to the glycosyl hydrolase 18 family. As to quaternary structure, monomer.

Its subcellular location is the secreted. The catalysed reaction is an N(4)-(oligosaccharide-(1-&gt;3)-[oligosaccharide-(1-&gt;6)]-beta-D-Man-(1-&gt;4)-beta-D-GlcNAc-(1-&gt;4)-alpha-D-GlcNAc)-L-asparaginyl-[protein] + H2O = an oligosaccharide-(1-&gt;3)-[oligosaccharide-(1-&gt;6)]-beta-D-Man-(1-&gt;4)-D-GlcNAc + N(4)-(N-acetyl-beta-D-glucosaminyl)-L-asparaginyl-[protein]. In terms of biological role, cleaves asparagine-linked oligomannose and hybrid, but not complex, oligosaccharides from glycoproteins. This Flavobacterium sp. (strain SK1022) protein is Endo-beta-N-acetylglucosaminidase.